The following is a 148-amino-acid chain: C-C motif chemokine 2 (148 aa).

Residues 1–23 form the signal peptide; it reads MQVPVMLLGLLFTVAGWSIHVLA. Glutamine 24 carries the pyrrolidone carboxylic acid modification. Disulfide bonds link cysteine 34–cysteine 59 and cysteine 35–cysteine 75. Asparagine 126 carries an N-linked (GlcNAc...) asparagine glycan.

Belongs to the intercrine beta (chemokine CC) family. As to quaternary structure, monomer or homodimer; in equilibrium. Is tethered on endothelial cells by glycosaminoglycan (GAG) side chains of proteoglycans. Interacts with TNFAIP6 (via Link domain). Processing at the N-terminus can regulate receptor and target cell selectivity. Deletion of the N-terminal residue converts it from an activator of basophil to an eosinophil chemoattractant. In terms of processing, N-Glycosylated.

The protein resides in the secreted. Its function is as follows. Acts as a ligand for C-C chemokine receptor CCR2. Signals through binding and activation of CCR2 and induces a strong chemotactic response and mobilization of intracellular calcium ions. Exhibits a chemotactic activity for monocytes and basophils but not neutrophils or eosinophils. Plays an important role in mediating peripheral nerve injury-induced neuropathic pain. Increases NMDA-mediated synaptic transmission in both dopamine D1 and D2 receptor-containing neurons, which may be caused by MAPK/ERK-dependent phosphorylation of GRIN2B/NMDAR2B. In Mus musculus (Mouse), this protein is C-C motif chemokine 2 (Ccl2).